We begin with the raw amino-acid sequence, 456 residues long: Tyrosine phenol-lyase (456 aa).

Lys-257 is subject to N6-(pyridoxal phosphate)lysine.

It belongs to the beta-eliminating lyase family. In terms of assembly, homotetramer. Pyridoxal 5'-phosphate is required as a cofactor.

It carries out the reaction L-tyrosine + H2O = phenol + pyruvate + NH4(+). The protein is Tyrosine phenol-lyase (tpl) of Citrobacter intermedius (Escherichia intermedia).